Consider the following 642-residue polypeptide: Threonine--tRNA ligase (642 aa).

The region spanning 1 to 61 is the TGS domain; that stretch reads MPVITLPDGS…ENDAQLSIIT (61 aa). The catalytic stretch occupies residues 243–534; it reads DHRKIGKQLD…LTEEFAGFFP (292 aa). Position 286 is an N6-acetyllysine (Lys286). 3 residues coordinate Zn(2+): Cys334, His385, and His511.

This sequence belongs to the class-II aminoacyl-tRNA synthetase family. As to quaternary structure, homodimer. Zn(2+) serves as cofactor.

It localises to the cytoplasm. The catalysed reaction is tRNA(Thr) + L-threonine + ATP = L-threonyl-tRNA(Thr) + AMP + diphosphate + H(+). Catalyzes the attachment of threonine to tRNA(Thr) in a two-step reaction: L-threonine is first activated by ATP to form Thr-AMP and then transferred to the acceptor end of tRNA(Thr). Also edits incorrectly charged L-seryl-tRNA(Thr). In Escherichia coli O157:H7, this protein is Threonine--tRNA ligase.